A 191-amino-acid polypeptide reads, in one-letter code: Potassium-transporting ATPase KdpC subunit (191 aa).

The helical transmembrane segment at 6 to 26 threads the bilayer; that stretch reads PALVLFILLTLLTGGVYPLLT.

This sequence belongs to the KdpC family. The system is composed of three essential subunits: KdpA, KdpB and KdpC.

It localises to the cell inner membrane. Part of the high-affinity ATP-driven potassium transport (or Kdp) system, which catalyzes the hydrolysis of ATP coupled with the electrogenic transport of potassium into the cytoplasm. This subunit acts as a catalytic chaperone that increases the ATP-binding affinity of the ATP-hydrolyzing subunit KdpB by the formation of a transient KdpB/KdpC/ATP ternary complex. The polypeptide is Potassium-transporting ATPase KdpC subunit (Klebsiella pneumoniae (strain 342)).